Consider the following 154-residue polypeptide: D-aminoacyl-tRNA deacylase (154 aa).

The Gly-cisPro motif, important for rejection of L-amino acids motif lies at 142–143 (GP).

Belongs to the DTD family. In terms of assembly, homodimer.

The protein resides in the cytoplasm. It catalyses the reaction glycyl-tRNA(Ala) + H2O = tRNA(Ala) + glycine + H(+). The enzyme catalyses a D-aminoacyl-tRNA + H2O = a tRNA + a D-alpha-amino acid + H(+). An aminoacyl-tRNA editing enzyme that deacylates mischarged D-aminoacyl-tRNAs. Also deacylates mischarged glycyl-tRNA(Ala), protecting cells against glycine mischarging by AlaRS. Acts via tRNA-based rather than protein-based catalysis; rejects L-amino acids rather than detecting D-amino acids in the active site. By recycling D-aminoacyl-tRNA to D-amino acids and free tRNA molecules, this enzyme counteracts the toxicity associated with the formation of D-aminoacyl-tRNA entities in vivo and helps enforce protein L-homochirality. The polypeptide is D-aminoacyl-tRNA deacylase (Acidovorax sp. (strain JS42)).